We begin with the raw amino-acid sequence, 278 residues long: Tryptophan synthase alpha chain (278 aa).

Active-site proton acceptor residues include glutamate 50 and aspartate 61.

It belongs to the TrpA family. In terms of assembly, tetramer of two alpha and two beta chains.

It carries out the reaction (1S,2R)-1-C-(indol-3-yl)glycerol 3-phosphate + L-serine = D-glyceraldehyde 3-phosphate + L-tryptophan + H2O. The protein operates within amino-acid biosynthesis; L-tryptophan biosynthesis; L-tryptophan from chorismate: step 5/5. The alpha subunit is responsible for the aldol cleavage of indoleglycerol phosphate to indole and glyceraldehyde 3-phosphate. The protein is Tryptophan synthase alpha chain of Methylorubrum populi (strain ATCC BAA-705 / NCIMB 13946 / BJ001) (Methylobacterium populi).